Here is a 467-residue protein sequence, read N- to C-terminus: MNKGKIFSMLPSVDQLLNNEAIISLIGVIPRSVVVKEIRQMIEEYRKNILMLNESQIIDFEIDIEEIIRKIIKNCYNFMDMNLREVINGTGTVLHTNLGRSLLSESIKEQVWDVASGYSTLEIDVTEGKRGSRYNHVSEIIKFITGAEDALVVNNNAAAVMLVLSTMAKDKEVILSRGEMVEIGGSFRVPDVMAQSGAKLVDIGTTNKTHLKDYENAVSEDTAAFLKVHTSNYKILGFTESVEVKELVNMGRKYNIPVIEDIGSGVLIDLQKYGLSYEPTVQESVSSGVDIVTFSGDKLLGGPQAGIIVGKKLYIDQMKQNPLTRAFRVDKLTMAALEATLKLYLDEEMALQKIPTLKMLTETAESIYERAKVLHSMIVSEKLDVVAGIAKDYSEVGGGSLPLEKLSTYVIEIESKSISTSKLENRLRKYRTPIFSRVRDNKVIIDLRTIKPEQYEIIVQAFNEVIQ.

Lysine 298 bears the N6-(pyridoxal phosphate)lysine mark.

Belongs to the SelA family. The cofactor is pyridoxal 5'-phosphate.

It is found in the cytoplasm. It carries out the reaction L-seryl-tRNA(Sec) + selenophosphate + H(+) = L-selenocysteinyl-tRNA(Sec) + phosphate. Its pathway is aminoacyl-tRNA biosynthesis; selenocysteinyl-tRNA(Sec) biosynthesis; selenocysteinyl-tRNA(Sec) from L-seryl-tRNA(Sec) (bacterial route): step 1/1. Converts seryl-tRNA(Sec) to selenocysteinyl-tRNA(Sec) required for selenoprotein biosynthesis. The protein is L-seryl-tRNA(Sec) selenium transferase of Alkaliphilus oremlandii (strain OhILAs) (Clostridium oremlandii (strain OhILAs)).